We begin with the raw amino-acid sequence, 342 residues long: Ribosomal RNA small subunit methyltransferase C (342 aa).

This sequence belongs to the methyltransferase superfamily. RsmC family. In terms of assembly, monomer.

The protein resides in the cytoplasm. The enzyme catalyses guanosine(1207) in 16S rRNA + S-adenosyl-L-methionine = N(2)-methylguanosine(1207) in 16S rRNA + S-adenosyl-L-homocysteine + H(+). In terms of biological role, specifically methylates the guanine in position 1207 of 16S rRNA in the 30S particle. In Salmonella heidelberg (strain SL476), this protein is Ribosomal RNA small subunit methyltransferase C.